The primary structure comprises 478 residues: UDP-glycosyltransferase 90A1 (478 aa).

UDP-alpha-D-glucose-binding positions include threonine 289, 343–345, 360–368, and 382–385; these read VDQ, HCGWNSAQE, and MAEQ.

This sequence belongs to the UDP-glycosyltransferase family.

The sequence is that of UDP-glycosyltransferase 90A1 (UGT90A1) from Arabidopsis thaliana (Mouse-ear cress).